We begin with the raw amino-acid sequence, 343 residues long: Ribosomal RNA small subunit methyltransferase C (343 aa).

This sequence belongs to the methyltransferase superfamily. RsmC family. As to quaternary structure, monomer.

The protein localises to the cytoplasm. The catalysed reaction is guanosine(1207) in 16S rRNA + S-adenosyl-L-methionine = N(2)-methylguanosine(1207) in 16S rRNA + S-adenosyl-L-homocysteine + H(+). In terms of biological role, specifically methylates the guanine in position 1207 of 16S rRNA in the 30S particle. This is Ribosomal RNA small subunit methyltransferase C from Escherichia coli O6:K15:H31 (strain 536 / UPEC).